Here is a 1178-residue protein sequence, read N- to C-terminus: Tricalbin-2 (1178 aa).

The span at 1–17 (MSPNSSKTRTDQISSMP) shows a compositional bias: polar residues. The segment at 1-27 (MSPNSSKTRTDQISSMPGINEATKVES) is disordered. Residues 1–98 (MSPNSSKTRT…NLLPDKFYGD (98 aa)) are Cytoplasmic-facing. A helical transmembrane segment spans residues 99–119 (WYHEVAILIIAGLCSFVLGYF). Lysine 120 is a topological domain (extracellular). A helical membrane pass occupies residues 121–141 (FSLASVLIVMLTTGMLYRTSS). Residues 142–1178 (KKYRESLRDL…TGDKKSEEKQ (1037 aa)) lie on the Cytoplasmic side of the membrane. Residues 164–367 (DYESVEWLNT…PPFSLQLNIP (204 aa)) enclose the SMP-LTD domain. 3 consecutive C2 domains span residues 358-481 (PPFS…EKVH), 504-628 (PKKL…LKVT), and 632-749 (RPVD…DKYT). A coiled-coil region spans residues 784-821 (LSLEEAKEVDEINEKKDKLEKQKSTLDDKNISKEEKER). Residues 962 to 1086 (QVSWFPVTAT…DPESDTTFNI (125 aa)) enclose the C2 4 domain. Serine 991 carries the phosphoserine modification.

The protein belongs to the tricalbin family. As to quaternary structure, interacts with TCB1 and TCB3 via its C-terminal domain.

The protein resides in the cell membrane. It is found in the endoplasmic reticulum membrane. Its function is as follows. May play a role in membrane trafficking. The protein is Tricalbin-2 (TCB2) of Saccharomyces cerevisiae (strain ATCC 204508 / S288c) (Baker's yeast).